The following is a 493-amino-acid chain: Alpha-amylase-related protein (493 aa).

The signal sequence occupies residues 1–19 (MFKFALTQTLCLAGSLSLA). A Pyrrolidone carboxylic acid modification is found at glutamine 20. Cysteines 47 and 103 form a disulfide. Residues asparagine 117, glutamine 168, and aspartate 177 each coordinate Ca(2+). Cysteines 156 and 170 form a disulfide. Arginine 205 is a binding site for chloride. Residue aspartate 207 is the Nucleophile of the active site. Histidine 211 contributes to the Ca(2+) binding site. Glutamate 244 serves as the catalytic Proton donor. Chloride contacts are provided by asparagine 307 and arginine 342. 3 cysteine pairs are disulfide-bonded: cysteine 375-cysteine 381, cysteine 417-cysteine 440, and cysteine 447-cysteine 459.

Belongs to the glycosyl hydrolase 13 family. Monomer. It depends on Ca(2+) as a cofactor. The cofactor is chloride.

It is found in the secreted. The enzyme catalyses Endohydrolysis of (1-&gt;4)-alpha-D-glucosidic linkages in polysaccharides containing three or more (1-&gt;4)-alpha-linked D-glucose units.. The protein is Alpha-amylase-related protein (Amyrel) of Drosophila mauritiana (Fruit fly).